A 94-amino-acid polypeptide reads, in one-letter code: Large ribosomal subunit protein bL28A (94 aa).

Residues Gly-63–Leu-94 are disordered. Residues Arg-72–Arg-82 are compositionally biased toward low complexity. Polar residues predominate over residues Ala-84 to Leu-94.

The protein belongs to the bacterial ribosomal protein bL28 family.

This is Large ribosomal subunit protein bL28A (rpmB1) from Mycobacterium bovis (strain ATCC BAA-935 / AF2122/97).